The following is a 565-amino-acid chain: Periplasmic trehalase (565 aa).

A signal peptide spans 1–30; that stretch reads MKSPAPSRPQKMALIPACIFLCFAALSVQA. Substrate-binding positions include Arg-152, 159–160, Asn-196, 205–207, 277–279, and Gly-310; these read WD, RSQ, and RPE. Residues Asp-312 and Glu-496 each act as proton donor/acceptor in the active site. Glu-511 provides a ligand contact to substrate. A disordered region spans residues 539–565; sequence CDNVPATRPLSESTTQPVKPKEAEPTL.

It belongs to the glycosyl hydrolase 37 family. Monomer.

The protein localises to the periplasm. It catalyses the reaction alpha,alpha-trehalose + H2O = alpha-D-glucose + beta-D-glucose. Functionally, provides the cells with the ability to utilize trehalose at high osmolarity by splitting it into glucose molecules that can subsequently be taken up by the phosphotransferase-mediated uptake system. The chain is Periplasmic trehalase from Shigella dysenteriae serotype 1 (strain Sd197).